A 255-amino-acid chain; its full sequence is Spectinomycin 9-adenylyltransferase (255 aa).

It catalyses the reaction spectinomycin + ATP = 9-O-adenylylspectinomycin + diphosphate. In terms of biological role, mediates bacterial resistance to the antibiotic spectinomycin but not streptomycin. This Enterococcus faecalis (Streptococcus faecalis) protein is Spectinomycin 9-adenylyltransferase.